A 787-amino-acid chain; its full sequence is Protein translocase subunit SecA (787 aa).

ATP contacts are provided by residues Gln85, 103–107, and Asp492; that span reads GEGKT.

Belongs to the SecA family. In terms of assembly, monomer and homodimer. Part of the essential Sec protein translocation apparatus which comprises SecA, SecYEG and auxiliary proteins SecDF. Other proteins may also be involved.

Its subcellular location is the cell membrane. It is found in the cytoplasm. The enzyme catalyses ATP + H2O + cellular proteinSide 1 = ADP + phosphate + cellular proteinSide 2.. Functionally, part of the Sec protein translocase complex. Interacts with the SecYEG preprotein conducting channel. Has a central role in coupling the hydrolysis of ATP to the transfer of proteins into and across the cell membrane, serving as an ATP-driven molecular motor driving the stepwise translocation of polypeptide chains across the membrane. The polypeptide is Protein translocase subunit SecA (Latilactobacillus sakei subsp. sakei (strain 23K) (Lactobacillus sakei subsp. sakei)).